We begin with the raw amino-acid sequence, 349 residues long: Hydroxymethylglutaryl-CoA synthase (349 aa).

Residues Asp-30 and Ala-31 each coordinate (3S)-3-hydroxy-3-methylglutaryl-CoA. Glu-82 serves as the catalytic Proton donor/acceptor. Cys-114 and Thr-155 together coordinate (3S)-3-hydroxy-3-methylglutaryl-CoA. Residue Cys-114 is the Acyl-thioester intermediate of the active site. Arg-203 is a binding site for CoA. Residues Thr-205 and His-238 each contribute to the (3S)-3-hydroxy-3-methylglutaryl-CoA site. The Proton donor/acceptor role is filled by His-238. Lys-243 lines the CoA pocket. (3S)-3-hydroxy-3-methylglutaryl-CoA is bound by residues Asn-270 and Ser-300.

It belongs to the thiolase-like superfamily. Archaeal HMG-CoA synthase family. Interacts with acetoacetyl-CoA thiolase that catalyzes the precedent step in the pathway and with a DUF35 protein. The acetoacetyl-CoA thiolase/HMG-CoA synthase complex channels the intermediate via a fused CoA-binding site, which allows for efficient coupling of the endergonic thiolase reaction with the exergonic HMGCS reaction.

It catalyses the reaction acetoacetyl-CoA + acetyl-CoA + H2O = (3S)-3-hydroxy-3-methylglutaryl-CoA + CoA + H(+). The protein operates within metabolic intermediate biosynthesis; (R)-mevalonate biosynthesis; (R)-mevalonate from acetyl-CoA: step 2/3. Its function is as follows. Catalyzes the condensation of acetyl-CoA with acetoacetyl-CoA to form 3-hydroxy-3-methylglutaryl-CoA (HMG-CoA). Functions in the mevalonate (MVA) pathway leading to isopentenyl diphosphate (IPP), a key precursor for the biosynthesis of isoprenoid compounds that are building blocks of archaeal membrane lipids. In Methanococcus maripaludis (strain C6 / ATCC BAA-1332), this protein is Hydroxymethylglutaryl-CoA synthase.